Here is a 267-residue protein sequence, read N- to C-terminus: Very long chain fatty acid elongase 6 (267 aa).

Asn-2 carries an N-linked (GlcNAc...) asparagine glycan. Transmembrane regions (helical) follow at residues 34–51 (FLFSALYAAFIFGGRHLM), 70–90 (LAVFSIFGALRTGAYMLYILM), 111–131 (FWAYAFVLSKAPELGDTIFII), 136–156 (KLIFLHWYHHITVLLYSWYSY), 159–179 (MVAGGGWFMTMNYGVHAVMYS), 197–217 (FITLSQITQMLMGCVINYLVF), and 234–254 (IFWSSLMYLSYLVLFCHFFFE).

The protein belongs to the ELO family. ELOVL6 subfamily. N-Glycosylated. As to expression, highly expressed in adrenal gland, liver, white adipose tissue (WAT), adult and fetal brain, cerebellum, spinal cord, testis, skin and peripheral nerve; where lipogenesis and steroidogenesis are active. Weakly expressed in kidney, heart, skeletal muscle, lung, and spleen.

The protein localises to the endoplasmic reticulum membrane. The catalysed reaction is a very-long-chain acyl-CoA + malonyl-CoA + H(+) = a very-long-chain 3-oxoacyl-CoA + CO2 + CoA. It carries out the reaction hexadecanoyl-CoA + malonyl-CoA + H(+) = 3-oxooctadecanoyl-CoA + CO2 + CoA. The enzyme catalyses (9Z)-hexadecenoyl-CoA + malonyl-CoA + H(+) = 3-oxo-(11Z)-octadecenoyl-CoA + CO2 + CoA. It catalyses the reaction dodecanoyl-CoA + malonyl-CoA + H(+) = 3-oxotetradecanoyl-CoA + CO2 + CoA. The catalysed reaction is tetradecanoyl-CoA + malonyl-CoA + H(+) = 3-oxohexadecanoyl-CoA + CO2 + CoA. It carries out the reaction (9Z)-octadecenoyl-CoA + malonyl-CoA + H(+) = 3-oxo-(11Z)-eicosenoyl-CoA + CO2 + CoA. The enzyme catalyses (9Z,12Z)-octadecadienoyl-CoA + malonyl-CoA + H(+) = (11Z,14Z)-3-oxoicosa-11,14-dienoyl-CoA + CO2 + CoA. It catalyses the reaction (9Z,12Z,15Z)-octadecatrienoyl-CoA + malonyl-CoA + H(+) = (11Z,14Z,17Z)-3-oxoeicosatrienoyl-CoA + CO2 + CoA. The protein operates within lipid metabolism; fatty acid biosynthesis. With respect to regulation, the reaction is stimulated by the presence of HSD17B12, the enzyme catalyzing the second step of the elongation cycle. Functionally, catalyzes the first and rate-limiting reaction of the four reactions that constitute the long-chain fatty acids elongation cycle. This endoplasmic reticulum-bound enzymatic process allows the addition of 2 carbons to the chain of long- and very long-chain fatty acids (VLCFAs) per cycle. Condensing enzyme that elongates fatty acids with 12, 14 and 16 carbons with higher activity toward C16:0 acyl-CoAs. Catalyzes the synthesis of unsaturated C16 long chain fatty acids and, to a lesser extent, C18:0 and those with low desaturation degree. May participate in the production of saturated and monounsaturated VLCFAs of different chain lengths that are involved in multiple biological processes as precursors of membrane lipids and lipid mediators. In Mus musculus (Mouse), this protein is Very long chain fatty acid elongase 6.